An 890-amino-acid polypeptide reads, in one-letter code: Agglutinin-like protein ARB_02240 (890 aa).

Residues 1 to 20 (MRLTTSVLLWAATSVLQADA) form the signal peptide. Residues asparagine 106, asparagine 217, asparagine 583, and asparagine 654 are each glycosylated (N-linked (GlcNAc...) asparagine). The tract at residues 680–872 (IPSGPTTRPE…GGAGSLSPST (193 aa)) is disordered. Composition is skewed to low complexity over residues 693–753 (TSST…TDSS) and 760–790 (TTST…HSST). Polar residues predominate over residues 791–802 (GSDPESTNTRHP). Low complexity-rich tracts occupy residues 803–812 (SSTASGSTTT) and 821–837 (SSSS…TATT). Over residues 838–848 (TGGGSIPGSGT) the composition is skewed to gly residues. Glycine 864 is lipidated: GPI-anchor amidated glycine. The propeptide at 865–890 (AGSLSPSTWGKVVTCISSMALLVAFI) is removed in mature form.

This sequence belongs to the ALS family. Post-translationally, the GPI-anchor is attached to the protein in the endoplasmic reticulum and serves to target the protein to the cell surface. There, the glucosamine-inositol phospholipid moiety is cleaved off and the GPI-modified mannoprotein is covalently attached via its lipidless GPI glycan remnant to the 1,6-beta-glucan of the outer cell wall layer.

It is found in the secreted. It localises to the cell membrane. The protein localises to the cell wall. In terms of biological role, cell surface adhesion protein which mediates cell agglutination and host tissue adherence. This chain is Agglutinin-like protein ARB_02240, found in Arthroderma benhamiae (strain ATCC MYA-4681 / CBS 112371) (Trichophyton mentagrophytes).